The following is a 150-amino-acid chain: MKSKRHTKILEIIGSREIETQEELADALKKEGFDVTQATVSRDIKNLKLIKMQSTNGKSKYAVSTGEQKNIIDRLSNILANTVLSVENVDKMVVIKTITGSAPITAEAIDNLESADIAGTVAGDNTIFILVRSLESAEDLVDKIRKRMSS.

Belongs to the ArgR family.

The protein localises to the cytoplasm. The protein operates within amino-acid biosynthesis; L-arginine biosynthesis [regulation]. Regulates arginine biosynthesis genes. The sequence is that of Arginine repressor from Clostridium beijerinckii (strain ATCC 51743 / NCIMB 8052) (Clostridium acetobutylicum).